A 140-amino-acid chain; its full sequence is Nucleoside diphosphate kinase (140 aa).

K11, F59, R87, T93, R104, and N114 together coordinate ATP. H117 functions as the Pros-phosphohistidine intermediate in the catalytic mechanism.

Belongs to the NDK family. As to quaternary structure, homotetramer. Requires Mg(2+) as cofactor.

It localises to the cytoplasm. It carries out the reaction a 2'-deoxyribonucleoside 5'-diphosphate + ATP = a 2'-deoxyribonucleoside 5'-triphosphate + ADP. It catalyses the reaction a ribonucleoside 5'-diphosphate + ATP = a ribonucleoside 5'-triphosphate + ADP. Its function is as follows. Major role in the synthesis of nucleoside triphosphates other than ATP. The ATP gamma phosphate is transferred to the NDP beta phosphate via a ping-pong mechanism, using a phosphorylated active-site intermediate. The sequence is that of Nucleoside diphosphate kinase from Gluconacetobacter diazotrophicus (strain ATCC 49037 / DSM 5601 / CCUG 37298 / CIP 103539 / LMG 7603 / PAl5).